The primary structure comprises 140 residues: Probable glycine cleavage system H protein 3 (140 aa).

Positions 29 to 110 constitute a Lipoyl-binding domain; it reads VVSIGVTDLG…PYDSWIVKIR (82 aa). Lysine 70 carries the post-translational modification N6-lipoyllysine.

Belongs to the GcvH family. The glycine cleavage system is composed of four proteins: P, T, L and H. The cofactor is (R)-lipoate.

Functionally, the glycine cleavage system catalyzes the degradation of glycine. The H protein shuttles the methylamine group of glycine from the P protein to the T protein. The chain is Probable glycine cleavage system H protein 3 from Saccharolobus solfataricus (strain ATCC 35092 / DSM 1617 / JCM 11322 / P2) (Sulfolobus solfataricus).